A 506-amino-acid chain; its full sequence is bZIP transcription factor TGA10 (506 aa).

2 disordered regions span residues 22–50 (VSYMDSSNKNQDPSESNNQISFGGQHQHH) and 113–218 (PSSI…KTLR). 4 stretches are compositionally biased toward polar residues: residues 25–45 (MDSSNKNQDPSESNNQISFGG), 113–124 (PSSIQEQRQNSG), 142–152 (PSTTNKMNTGL), and 160–180 (SKRSSQPSMELSNNLKNNDAP). Basic and acidic residues predominate over residues 207-216 (DAPKTPDPKT). Positions 213–257 (DPKTLRRLAQNREAARKSRLRKKAYVQQLESSRIRLTQLEQELQR) constitute a bZIP domain. A basic motif region spans residues 215–235 (KTLRRLAQNREAARKSRLRKK). A Nuclear localization signal motif is present at residues 217-224 (LRRLAQNR). The segment at 241 to 255 (LESSRIRLTQLEQEL) is leucine-zipper. Positions 288 to 502 (AAVFDMEYAR…RALSSLWHAR (215 aa)) constitute a DOG1 domain.

Belongs to the bZIP family. As to quaternary structure, binds DNA as a dimer. Interacts with TGA2.2. Specifically expressed in roots.

The protein localises to the nucleus. Transcription activator that binds to as1-like elements (5'-TGACGTAAgggaTGACGCA-3') in promoters of target genes. Regulates transcription in response to plant signaling molecules salicylic acid (SA), methyl jasmonate (MJ) and auxin (2,4D) only in leaves. Prevents lateral branching and may repress defense signaling. The polypeptide is bZIP transcription factor TGA10 (Nicotiana tabacum (Common tobacco)).